The chain runs to 321 residues: Ribose-phosphate pyrophosphokinase 1 (321 aa).

Residues D131, H133, D142, and D146 each coordinate Mg(2+).

It belongs to the ribose-phosphate pyrophosphokinase family.

The catalysed reaction is D-ribose 5-phosphate + ATP = 5-phospho-alpha-D-ribose 1-diphosphate + AMP + H(+). The polypeptide is Ribose-phosphate pyrophosphokinase 1 (PRS1) (Candida albicans (Yeast)).